Here is a 195-residue protein sequence, read N- to C-terminus: Translation initiation factor IF-3 (195 aa).

Residues 158 to 195 (EQSEVQQRPKREGRNMIMFLSPRKTPLIKKEEDAKENN) are disordered. Over residues 185–195 (IKKEEDAKENN) the composition is skewed to basic and acidic residues.

Belongs to the IF-3 family. Monomer.

It localises to the cytoplasm. In terms of biological role, IF-3 binds to the 30S ribosomal subunit and shifts the equilibrium between 70S ribosomes and their 50S and 30S subunits in favor of the free subunits, thus enhancing the availability of 30S subunits on which protein synthesis initiation begins. The sequence is that of Translation initiation factor IF-3 from Prochlorococcus marinus (strain MIT 9515).